Reading from the N-terminus, the 165-residue chain is Large ribosomal subunit protein uL5 (165 aa).

The protein belongs to the universal ribosomal protein uL5 family. As to quaternary structure, part of the 50S ribosomal subunit; contacts the 5S rRNA and probably tRNA. Forms a bridge to the 30S subunit in the 70S ribosome.

Functionally, this is one of the proteins that bind and probably mediate the attachment of the 5S RNA into the large ribosomal subunit, where it forms part of the central protuberance. In the 70S ribosome it contacts protein S13 of the 30S subunit (bridge B1b), connecting the 2 subunits; this bridge is implicated in subunit movement. May contact the P site tRNA; the 5S rRNA and some of its associated proteins might help stabilize positioning of ribosome-bound tRNAs. The sequence is that of Large ribosomal subunit protein uL5 from Methanosarcina acetivorans (strain ATCC 35395 / DSM 2834 / JCM 12185 / C2A).